The chain runs to 148 residues: Endoribonuclease YbeY (148 aa).

Zn(2+)-binding residues include histidine 102, histidine 106, and histidine 112.

This sequence belongs to the endoribonuclease YbeY family. Zn(2+) serves as cofactor.

The protein localises to the cytoplasm. In terms of biological role, single strand-specific metallo-endoribonuclease involved in late-stage 70S ribosome quality control and in maturation of the 3' terminus of the 16S rRNA. The chain is Endoribonuclease YbeY from Phytoplasma mali (strain AT).